Reading from the N-terminus, the 200-residue chain is FMN-dependent NADH:quinone oxidoreductase (200 aa).

Residues serine 10 and 95 to 98 (MYNF) each bind FMN.

The protein belongs to the azoreductase type 1 family. As to quaternary structure, homodimer. The cofactor is FMN.

It carries out the reaction 2 a quinone + NADH + H(+) = 2 a 1,4-benzosemiquinone + NAD(+). The catalysed reaction is N,N-dimethyl-1,4-phenylenediamine + anthranilate + 2 NAD(+) = 2-(4-dimethylaminophenyl)diazenylbenzoate + 2 NADH + 2 H(+). Quinone reductase that provides resistance to thiol-specific stress caused by electrophilic quinones. Its function is as follows. Also exhibits azoreductase activity. Catalyzes the reductive cleavage of the azo bond in aromatic azo compounds to the corresponding amines. This Alteromonas mediterranea (strain DSM 17117 / CIP 110805 / LMG 28347 / Deep ecotype) protein is FMN-dependent NADH:quinone oxidoreductase.